A 111-amino-acid chain; its full sequence is Protein E7 (111 aa).

An E7 terminal domain region spans residues 1 to 44 (MHGERPTLGDIVLNLHPEPVCLNCNEQLDSSDSEDDHEQDQLDS). The LXCXE motif; interaction with host RB1 and TMEM173/STING signature appears at 22–26 (LNCNE). The interval 28-54 (LDSSDSEDDHEQDQLDSLHSREREQPT) is disordered. Residues 29-38 (DSSDSEDDHE) show a composition bias toward acidic residues. Residues 39-52 (QDQLDSLHSREREQ) show a composition bias toward basic and acidic residues. A zinc finger lies at 71–107 (CVFCQCLVRLAVHCSITDITQFQQLLMGTLHIVCPNC). The short motif at 89–97 (ITQFQQLLM) is the Nuclear export signal element.

This sequence belongs to the papillomaviridae E7 protein family. As to quaternary structure, homodimer. Homooligomer. Interacts with host RB1; this interaction induces dissociation of RB1-E2F1 complex thereby disrupting RB1 activity. Interacts with host EP300; this interaction represses EP300 transcriptional activity. Interacts with protein E2; this interaction inhibits E7 oncogenic activity. Interacts with host TMEM173/STING; this interaction impairs the ability of TMEM173/STING to sense cytosolic DNA and promote the production of type I interferon (IFN-alpha and IFN-beta). In terms of processing, highly phosphorylated.

The protein localises to the host cytoplasm. It localises to the host nucleus. Functionally, plays a role in viral genome replication by driving entry of quiescent cells into the cell cycle. Stimulation of progression from G1 to S phase allows the virus to efficiently use the cellular DNA replicating machinery to achieve viral genome replication. E7 protein has both transforming and trans-activating activities. Induces the disassembly of the E2F1 transcription factor from RB1, with subsequent transcriptional activation of E2F1-regulated S-phase genes. Interferes with host histone deacetylation mediated by HDAC1 and HDAC2, leading to transcription activation. Also plays a role in the inhibition of both antiviral and antiproliferative functions of host interferon alpha. Interaction with host TMEM173/STING impairs the ability of TMEM173/STING to sense cytosolic DNA and promote the production of type I interferon (IFN-alpha and IFN-beta). This chain is Protein E7, found in Homo sapiens (Human).